Consider the following 209-residue polypeptide: Guanylate kinase (209 aa).

The Guanylate kinase-like domain maps to 7–185 (GNLYIVAAPS…AAMELQSIVI (179 aa)). 14–21 (APSGGGKT) serves as a coordination point for ATP.

This sequence belongs to the guanylate kinase family.

The protein resides in the cytoplasm. It carries out the reaction GMP + ATP = GDP + ADP. Essential for recycling GMP and indirectly, cGMP. This chain is Guanylate kinase, found in Legionella pneumophila (strain Lens).